Reading from the N-terminus, the 392-residue chain is Metallophosphoesterase 1 (392 aa).

The chain crosses the membrane as a helical span at residues lysine 25–valine 45. 6 residues coordinate a divalent metal cation: aspartate 73, aspartate 115, asparagine 153, histidine 246, histidine 300, and histidine 302. Residues aspartate 352–histidine 372 traverse the membrane as a helical segment.

The protein belongs to the metallophosphoesterase superfamily. MPPE1 family. Interacts with GPI-anchor proteins (via the GPI portion). Interacts with TMED10. The cofactor is Mn(2+).

It is found in the endoplasmic reticulum-Golgi intermediate compartment membrane. In terms of biological role, metallophosphoesterase that catalyzes the removal of a side-chain ethanolamine-phosphate (EtNP) from the second mannose of the GPI-anchor protein intermediate. Participates in the glycan remodeling steps of GPI-anchor maturation to allow an efficient transport of GPI-anchor proteins from the endoplasmic reticulum to the Golgi. This Ailuropoda melanoleuca (Giant panda) protein is Metallophosphoesterase 1.